The sequence spans 317 residues: Olfactory receptor 1B1 (317 aa).

The Extracellular segment spans residues 1–29; sequence MSFAPNASHSPVFLLLGFSRANISYTLLF. N-linked (GlcNAc...) asparagine glycans are attached at residues N6 and N22. Residues 30 to 50 traverse the membrane as a helical segment; sequence FLFLAIYLTTILGNVTLVLLI. Topologically, residues 51–66 are cytoplasmic; the sequence is SWDSRLHSPMYYLLRG. The chain crosses the membrane as a helical span at residues 67 to 87; that stretch reads LSVIDMGLSTVTLPQLLAHLV. The Extracellular segment spans residues 88–98; that stretch reads SHYPTIPAARC. A disulfide bond links C98 and C184. The helical transmembrane segment at 99 to 119 threads the bilayer; the sequence is LAQFFFFYAFGVTDTLVIAVM. At 120-144 the chain is on the cytoplasmic side; it reads ALDRYVAICDPLHYALVMNHQRCAC. The chain crosses the membrane as a helical span at residues 145–165; it reads LLALSWVVSILHTMLRVGLVL. Over 166 to 201 the chain is Extracellular; that stretch reads PLCWTGDAGGNVNLPHFFCDHRPLLRASCSDIHSNE. Residues 202 to 222 form a helical membrane-spanning segment; the sequence is LAIFFEGGFLMLGPCALIVLS. The Cytoplasmic portion of the chain corresponds to 223–248; sequence YVRIGAAILRLPSAAGRRRAVSTCGS. The chain crosses the membrane as a helical span at residues 249–269; sequence HLTMVGFLYGTIICVYFQPPF. The Extracellular portion of the chain corresponds to 270–276; it reads QNSQYQD. Residues 277–297 traverse the membrane as a helical segment; the sequence is MVASVMYTAITPLANPFVYSL. At 298–317 the chain is on the cytoplasmic side; that stretch reads HNKDVKGALCRLLEWVKVDP.

Belongs to the G-protein coupled receptor 1 family.

The protein resides in the cell membrane. In terms of biological role, odorant receptor. This is Olfactory receptor 1B1 (OR1B1) from Homo sapiens (Human).